Consider the following 175-residue polypeptide: Protein FanH (175 aa).

A signal peptide spans 1-20; it reads MIKKVPVLLFFMASISITHA. The cysteines at positions 39 and 77 are disulfide-linked.

The protein resides in the fimbrium. In terms of biological role, involved in the biosynthesis of K99 fimbriae. This is Protein FanH (fanH) from Escherichia coli.